We begin with the raw amino-acid sequence, 211 residues long: Thiamine-phosphate synthase (211 aa).

4-amino-2-methyl-5-(diphosphooxymethyl)pyrimidine-binding positions include 37 to 41 and N69; that span reads QLRIK. 2 residues coordinate Mg(2+): D70 and D89. S108 is a 4-amino-2-methyl-5-(diphosphooxymethyl)pyrimidine binding site. 134–136 lines the 2-[(2R,5Z)-2-carboxy-4-methylthiazol-5(2H)-ylidene]ethyl phosphate pocket; it reads TQT. K137 lines the 4-amino-2-methyl-5-(diphosphooxymethyl)pyrimidine pocket. Residues G166 and 186–187 each bind 2-[(2R,5Z)-2-carboxy-4-methylthiazol-5(2H)-ylidene]ethyl phosphate; that span reads VS.

Belongs to the thiamine-phosphate synthase family. Mg(2+) is required as a cofactor.

It catalyses the reaction 2-[(2R,5Z)-2-carboxy-4-methylthiazol-5(2H)-ylidene]ethyl phosphate + 4-amino-2-methyl-5-(diphosphooxymethyl)pyrimidine + 2 H(+) = thiamine phosphate + CO2 + diphosphate. It carries out the reaction 2-(2-carboxy-4-methylthiazol-5-yl)ethyl phosphate + 4-amino-2-methyl-5-(diphosphooxymethyl)pyrimidine + 2 H(+) = thiamine phosphate + CO2 + diphosphate. The enzyme catalyses 4-methyl-5-(2-phosphooxyethyl)-thiazole + 4-amino-2-methyl-5-(diphosphooxymethyl)pyrimidine + H(+) = thiamine phosphate + diphosphate. It participates in cofactor biosynthesis; thiamine diphosphate biosynthesis; thiamine phosphate from 4-amino-2-methyl-5-diphosphomethylpyrimidine and 4-methyl-5-(2-phosphoethyl)-thiazole: step 1/1. In terms of biological role, condenses 4-methyl-5-(beta-hydroxyethyl)thiazole monophosphate (THZ-P) and 2-methyl-4-amino-5-hydroxymethyl pyrimidine pyrophosphate (HMP-PP) to form thiamine monophosphate (TMP). The polypeptide is Thiamine-phosphate synthase (Citrobacter koseri (strain ATCC BAA-895 / CDC 4225-83 / SGSC4696)).